A 329-amino-acid polypeptide reads, in one-letter code: NADH-quinone oxidoreductase subunit H (329 aa).

9 helical membrane-spanning segments follow: residues 9-29 (LIKI…ATYI), 42-62 (GPCY…IKLF), 75-95 (FIFT…MAPI), 117-137 (IGFL…ILAG), 154-174 (IQLL…LMVV), 188-208 (GGFL…FLIA), 238-258 (LKWG…SFVI), 269-291 (WGFI…LSMW), and 309-329 (WKIM…IILI).

The protein belongs to the complex I subunit 1 family. In terms of assembly, NDH-1 is composed of 14 different subunits. Subunits NuoA, H, J, K, L, M, N constitute the membrane sector of the complex.

The protein localises to the cell inner membrane. The enzyme catalyses a quinone + NADH + 5 H(+)(in) = a quinol + NAD(+) + 4 H(+)(out). Functionally, NDH-1 shuttles electrons from NADH, via FMN and iron-sulfur (Fe-S) centers, to quinones in the respiratory chain. The immediate electron acceptor for the enzyme in this species is believed to be ubiquinone. Couples the redox reaction to proton translocation (for every two electrons transferred, four hydrogen ions are translocated across the cytoplasmic membrane), and thus conserves the redox energy in a proton gradient. This subunit may bind ubiquinone. The chain is NADH-quinone oxidoreductase subunit H from Helicobacter pylori (strain P12).